Consider the following 72-residue polypeptide: Small ribosomal subunit protein bS18 (72 aa).

Belongs to the bacterial ribosomal protein bS18 family. Part of the 30S ribosomal subunit. Forms a tight heterodimer with protein bS6.

Functionally, binds as a heterodimer with protein bS6 to the central domain of the 16S rRNA, where it helps stabilize the platform of the 30S subunit. This Francisella tularensis subsp. holarctica (strain FTNF002-00 / FTA) protein is Small ribosomal subunit protein bS18.